The sequence spans 313 residues: Formimidoylglutamase (313 aa).

Mn(2+)-binding residues include His-130, Asp-155, His-157, Asp-159, Asp-241, and Asp-243.

Belongs to the arginase family. The cofactor is Mn(2+).

The catalysed reaction is N-formimidoyl-L-glutamate + H2O = formamide + L-glutamate. The protein operates within amino-acid degradation; L-histidine degradation into L-glutamate; L-glutamate from N-formimidoyl-L-glutamate (hydrolase route): step 1/1. Its function is as follows. Catalyzes the conversion of N-formimidoyl-L-glutamate to L-glutamate and formamide. The chain is Formimidoylglutamase from Salmonella enteritidis PT4 (strain P125109).